The sequence spans 27 residues: Cupiennin-4b (27 aa).

Glutamine 27 carries the post-translational modification Glutamine amide.

Expressed by the venom gland.

The protein localises to the secreted. This is Cupiennin-4b from Cupiennius salei (American wandering spider).